Here is a 253-residue protein sequence, read N- to C-terminus: Imidazole glycerol phosphate synthase subunit HisF (253 aa).

Residues D11 and D130 contribute to the active site.

This sequence belongs to the HisA/HisF family. Heterodimer of HisH and HisF.

It is found in the cytoplasm. The enzyme catalyses 5-[(5-phospho-1-deoxy-D-ribulos-1-ylimino)methylamino]-1-(5-phospho-beta-D-ribosyl)imidazole-4-carboxamide + L-glutamine = D-erythro-1-(imidazol-4-yl)glycerol 3-phosphate + 5-amino-1-(5-phospho-beta-D-ribosyl)imidazole-4-carboxamide + L-glutamate + H(+). It participates in amino-acid biosynthesis; L-histidine biosynthesis; L-histidine from 5-phospho-alpha-D-ribose 1-diphosphate: step 5/9. Functionally, IGPS catalyzes the conversion of PRFAR and glutamine to IGP, AICAR and glutamate. The HisF subunit catalyzes the cyclization activity that produces IGP and AICAR from PRFAR using the ammonia provided by the HisH subunit. In Geobacter metallireducens (strain ATCC 53774 / DSM 7210 / GS-15), this protein is Imidazole glycerol phosphate synthase subunit HisF.